Reading from the N-terminus, the 228-residue chain is Cytochrome c oxidase subunit 2 (228 aa).

The Mitochondrial intermembrane segment spans residues 1–26 (MSTWANLGLQDSASPLMEQLIFFHDH). Residues 27–48 (ALLILVMITVLVGYLMFMLFFN) traverse the membrane as a helical segment. The Mitochondrial matrix segment spans residues 49 to 62 (NYVNRFLLHGQLIE). The chain crosses the membrane as a helical span at residues 63–82 (MIWTILPAIILLFIALPSLR). The Mitochondrial intermembrane portion of the chain corresponds to 83-228 (LLYLLDEINE…FIKWISSNNS (146 aa)). Cu cation is bound by residues H161, C196, E198, C200, H204, and M207. Residue E198 coordinates Mg(2+).

Belongs to the cytochrome c oxidase subunit 2 family. As to quaternary structure, component of the cytochrome c oxidase (complex IV, CIV), a multisubunit enzyme composed of a catalytic core of 3 subunits and several supernumerary subunits. The complex exists as a monomer or a dimer and forms supercomplexes (SCs) in the inner mitochondrial membrane with ubiquinol-cytochrome c oxidoreductase (cytochrome b-c1 complex, complex III, CIII). Requires Cu cation as cofactor.

The protein resides in the mitochondrion inner membrane. It catalyses the reaction 4 Fe(II)-[cytochrome c] + O2 + 8 H(+)(in) = 4 Fe(III)-[cytochrome c] + 2 H2O + 4 H(+)(out). Functionally, component of the cytochrome c oxidase, the last enzyme in the mitochondrial electron transport chain which drives oxidative phosphorylation. The respiratory chain contains 3 multisubunit complexes succinate dehydrogenase (complex II, CII), ubiquinol-cytochrome c oxidoreductase (cytochrome b-c1 complex, complex III, CIII) and cytochrome c oxidase (complex IV, CIV), that cooperate to transfer electrons derived from NADH and succinate to molecular oxygen, creating an electrochemical gradient over the inner membrane that drives transmembrane transport and the ATP synthase. Cytochrome c oxidase is the component of the respiratory chain that catalyzes the reduction of oxygen to water. Electrons originating from reduced cytochrome c in the intermembrane space (IMS) are transferred via the dinuclear copper A center (CU(A)) of subunit 2 and heme A of subunit 1 to the active site in subunit 1, a binuclear center (BNC) formed by heme A3 and copper B (CU(B)). The BNC reduces molecular oxygen to 2 water molecules using 4 electrons from cytochrome c in the IMS and 4 protons from the mitochondrial matrix. In Drosophila yakuba (Fruit fly), this protein is Cytochrome c oxidase subunit 2 (mt:CoII).